The following is a 354-amino-acid chain: Multiple sugar-binding periplasmic receptor ChvE (354 aa).

The first 25 residues, Met1–Ala25, serve as a signal peptide directing secretion.

This sequence belongs to the bacterial solute-binding protein 2 family.

Its subcellular location is the periplasm. Required for effective transcriptional induction of the vir genes by monosaccharides in response to plant signals and for normal growth and chemotaxis towards certain sugars. Functions as a periplasmic multiple sugar-binding receptor protein. It does not interact with a transport system. This Rhizobium radiobacter (Agrobacterium tumefaciens) protein is Multiple sugar-binding periplasmic receptor ChvE (chvE).